The following is a 391-amino-acid chain: Phosphoglycerate kinase (391 aa).

Substrate is bound by residues 21-23 (DLN), R36, 59-62 (HLGR), R113, and R146. ATP is bound by residues K197, E319, and 345-348 (GGDT).

Belongs to the phosphoglycerate kinase family. As to quaternary structure, monomer.

The protein localises to the cytoplasm. The catalysed reaction is (2R)-3-phosphoglycerate + ATP = (2R)-3-phospho-glyceroyl phosphate + ADP. It functions in the pathway carbohydrate degradation; glycolysis; pyruvate from D-glyceraldehyde 3-phosphate: step 2/5. This is Phosphoglycerate kinase from Shewanella sp. (strain W3-18-1).